Here is a 562-residue protein sequence, read N- to C-terminus: Probable malate:quinone oxidoreductase (562 aa).

The interval 535–562 (SATPADPTIAPKNQHSTTYNANSEMQAL) is disordered. Residues 545-562 (PKNQHSTTYNANSEMQAL) are compositionally biased toward polar residues.

It belongs to the MQO family. It depends on FAD as a cofactor.

It carries out the reaction (S)-malate + a quinone = a quinol + oxaloacetate. Its pathway is carbohydrate metabolism; tricarboxylic acid cycle; oxaloacetate from (S)-malate (quinone route): step 1/1. This Xylella fastidiosa (strain M23) protein is Probable malate:quinone oxidoreductase.